The chain runs to 329 residues: DNA-directed RNA polymerase subunit alpha (329 aa).

Residues 1 to 235 (MQNSIIGFLK…EQLEAFVDLR (235 aa)) are alpha N-terminal domain (alpha-NTD). The interval 249–329 (FEPILLRPVD…KWPPSSILEE (81 aa)) is alpha C-terminal domain (alpha-CTD).

Belongs to the RNA polymerase alpha chain family. As to quaternary structure, homodimer. The RNAP catalytic core consists of 2 alpha, 1 beta, 1 beta' and 1 omega subunit. When a sigma factor is associated with the core the holoenzyme is formed, which can initiate transcription.

It carries out the reaction RNA(n) + a ribonucleoside 5'-triphosphate = RNA(n+1) + diphosphate. DNA-dependent RNA polymerase catalyzes the transcription of DNA into RNA using the four ribonucleoside triphosphates as substrates. This Buchnera aphidicola subsp. Schizaphis graminum (strain Sg) protein is DNA-directed RNA polymerase subunit alpha.